The sequence spans 288 residues: Bifunctional protein FolD (288 aa).

Residues 166 to 168 (GAS) and Ile-232 each bind NADP(+).

Belongs to the tetrahydrofolate dehydrogenase/cyclohydrolase family. In terms of assembly, homodimer.

It carries out the reaction (6R)-5,10-methylene-5,6,7,8-tetrahydrofolate + NADP(+) = (6R)-5,10-methenyltetrahydrofolate + NADPH. The catalysed reaction is (6R)-5,10-methenyltetrahydrofolate + H2O = (6R)-10-formyltetrahydrofolate + H(+). The protein operates within one-carbon metabolism; tetrahydrofolate interconversion. Its function is as follows. Catalyzes the oxidation of 5,10-methylenetetrahydrofolate to 5,10-methenyltetrahydrofolate and then the hydrolysis of 5,10-methenyltetrahydrofolate to 10-formyltetrahydrofolate. This Escherichia fergusonii (strain ATCC 35469 / DSM 13698 / CCUG 18766 / IAM 14443 / JCM 21226 / LMG 7866 / NBRC 102419 / NCTC 12128 / CDC 0568-73) protein is Bifunctional protein FolD.